The primary structure comprises 1106 residues: Carbamoyl phosphate synthase large chain (1106 aa).

Residues 1–402 (MPRREDIRSV…SFQKALRSLE (402 aa)) form a carboxyphosphate synthetic domain region. Residues R129, R169, G175, G176, E208, V210, E215, G241, V242, H243, Q285, and E299 each contribute to the ATP site. The 196-residue stretch at 133–328 (KKAMEKIGVR…IAKIAALLSI (196 aa)) folds into the ATP-grasp 1 domain. Positions 285, 299, and 301 each coordinate Mg(2+). Mn(2+) is bound by residues Q285, E299, and N301. Residues 403–582 (IDRYGFGSDG…YSSYDEEDES (180 aa)) are oligomerization domain. Residues 583–964 (DVTNAKSVMI…AFLKSQYMAG (382 aa)) form a carbamoyl phosphate synthetic domain region. One can recognise an ATP-grasp 2 domain in the interval 707–898 (VEVLEKLKLN…IVKYATRIMM (192 aa)). Residues R743, S782, L784, E789, G814, I815, H816, S817, Q857, and E869 each contribute to the ATP site. Residues Q857, E869, and N871 each contribute to the Mg(2+) site. The Mn(2+) site is built by Q857, E869, and N871. The 142-residue stretch at 965–1106 (DELPSQGTVF…QEIHAMPKIL (142 aa)) folds into the MGS-like domain. Residues 965–1106 (DELPSQGTVF…QEIHAMPKIL (142 aa)) form an allosteric domain region.

The protein belongs to the CarB family. In terms of assembly, composed of two chains; the small (or glutamine) chain promotes the hydrolysis of glutamine to ammonia, which is used by the large (or ammonia) chain to synthesize carbamoyl phosphate. Tetramer of heterodimers (alpha,beta)4. The cofactor is Mg(2+). Requires Mn(2+) as cofactor.

The enzyme catalyses hydrogencarbonate + L-glutamine + 2 ATP + H2O = carbamoyl phosphate + L-glutamate + 2 ADP + phosphate + 2 H(+). It catalyses the reaction hydrogencarbonate + NH4(+) + 2 ATP = carbamoyl phosphate + 2 ADP + phosphate + 2 H(+). It participates in amino-acid biosynthesis; L-arginine biosynthesis; carbamoyl phosphate from bicarbonate: step 1/1. The protein operates within pyrimidine metabolism; UMP biosynthesis via de novo pathway; (S)-dihydroorotate from bicarbonate: step 1/3. Its function is as follows. Large subunit of the glutamine-dependent carbamoyl phosphate synthetase (CPSase). CPSase catalyzes the formation of carbamoyl phosphate from the ammonia moiety of glutamine, carbonate, and phosphate donated by ATP, constituting the first step of 2 biosynthetic pathways, one leading to arginine and/or urea and the other to pyrimidine nucleotides. The large subunit (synthetase) binds the substrates ammonia (free or transferred from glutamine from the small subunit), hydrogencarbonate and ATP and carries out an ATP-coupled ligase reaction, activating hydrogencarbonate by forming carboxy phosphate which reacts with ammonia to form carbamoyl phosphate. In Leptospira interrogans serogroup Icterohaemorrhagiae serovar copenhageni (strain Fiocruz L1-130), this protein is Carbamoyl phosphate synthase large chain.